Consider the following 273-residue polypeptide: Large ribosomal subunit protein uL2 (273 aa).

Residues 221 to 273 (RGTAMNPVDHPHGGGEGRNFGKHPVTPWGVQTKGKKTRHNKRTDKFIVRRRGK) are disordered. The segment covering 253–273 (KGKKTRHNKRTDKFIVRRRGK) has biased composition (basic residues).

Belongs to the universal ribosomal protein uL2 family. Part of the 50S ribosomal subunit. Forms a bridge to the 30S subunit in the 70S ribosome.

Functionally, one of the primary rRNA binding proteins. Required for association of the 30S and 50S subunits to form the 70S ribosome, for tRNA binding and peptide bond formation. It has been suggested to have peptidyltransferase activity; this is somewhat controversial. Makes several contacts with the 16S rRNA in the 70S ribosome. The protein is Large ribosomal subunit protein uL2 of Glaesserella parasuis serovar 5 (strain SH0165) (Haemophilus parasuis).